We begin with the raw amino-acid sequence, 529 residues long: Protein PNS1 (529 aa).

Residues 1–58 are disordered; it reads MSQQYSYGGGGGAGYPPPQMQPPNSYAQANYQGQPQGAQNQYYNGQQPHHNAPQQYYG. The Cytoplasmic portion of the chain corresponds to 1 to 84; sequence MSQQYSYGGG…LQPKPKFRDP (84 aa). A compositionally biased stretch (low complexity) spans 22–48; sequence PPNSYAQANYQGQPQGAQNQYYNGQQP. A helical transmembrane segment spans residues 85–105; that stretch reads IFLVLFLLVFAGFIALSVICL. Residues 106-132 are Extracellular-facing; that stretch reads RSYSNADVNVSIGRANVAGSTLNGHTA. An N-linked (GlcNAc...) asparagine glycan is attached at Asn114. The chain crosses the membrane as a helical span at residues 133 to 153; sequence IMFMICCAVALVLSFVYILLV. At 154–158 the chain is on the cytoplasmic side; that stretch reads RTFPK. The chain crosses the membrane as a helical span at residues 159–179; the sequence is IILEATLLLTTLSNVAFCVYL. Residues 180 to 184 are Extracellular-facing; that stretch reads WVRGN. A helical membrane pass occupies residues 185 to 205; the sequence is TAAAIIFTIFAVLSVIAYFFM. Residues 206–230 are Cytoplasmic-facing; the sequence is RKRIPLAKLILVTVIRTAEQYKSVY. The helical transmembrane segment at 231 to 251 threads the bilayer; that stretch reads VVALGGLIVETAFSAWTSWVV. Over 252 to 271 the chain is Extracellular; the sequence is VAAYQRFEPSGQAAGSSSSN. Asn271 carries N-linked (GlcNAc...) asparagine glycosylation. The chain crosses the membrane as a helical span at residues 272-292; it reads ASIIGIMVFIVFAYYWISEVI. Residues 293 to 294 are Cytoplasmic-facing; that stretch reads KN. The chain crosses the membrane as a helical span at residues 295–315; that stretch reads IAFTTVAGIFGVAYYNANKVA. The Extracellular portion of the chain corresponds to 316–325; it reads NAAWGAFRRS. Residues 326 to 346 form a helical membrane-spanning segment; the sequence is MTYSLGSICFGSLIVAILDLL. The Cytoplasmic segment spans residues 347 to 362; sequence RALFNILQSQAASDGD. Residues 363–383 traverse the membrane as a helical segment; that stretch reads MTGQILACVAGCCVSCIQGLV. Over 384-427 the chain is Extracellular; the sequence is DYFNRYAYINIALYGNGYITAAKETWALLKDRGIDAIINDSLVN. Asn422 is a glycosylation site (N-linked (GlcNAc...) asparagine). Residues 428–448 form a helical membrane-spanning segment; it reads IVFNCGAFIIGLLTALFAFIY. The Cytoplasmic segment spans residues 449–464; the sequence is EQLTNPRYLQNDAGYY. Residues 465–485 form a helical membrane-spanning segment; that stretch reads SIVLLVAFGLGFNIALSVGAG. Residues 486-529 lie on the Extracellular side of the membrane; the sequence is SIASGVSTYFVALAEDPYILQGKNPELFEMIRQQYPQVVQGVNH.

Belongs to the CTL (choline transporter-like) family.

It localises to the cell membrane. Functionally, probably involved in transport through the plasma membrane. The polypeptide is Protein PNS1 (PNS1) (Mycosarcoma maydis (Corn smut fungus)).